The sequence spans 297 residues: Rhomboid-type serine protease 2 (297 aa).

Transmembrane regions (helical) follow at residues 14–34 (IQHP…IFLL), 60–80 (ISFY…LVAL), 98–118 (IVLN…SIGF), 120–140 (PDEA…YWAI), 155–175 (LVVP…IVIP), and 179–199 (FIGH…YLDV). Catalysis depends on Ser-128, which acts as the Nucleophile. Residue His-182 is part of the active site. The segment at 268–297 (DLEAGTRSRGNSSVDPTTSFPGTGQTLGTQ) is disordered. The span at 275–297 (SRGNSSVDPTTSFPGTGQTLGTQ) shows a compositional bias: polar residues.

Belongs to the peptidase S54 family.

Its subcellular location is the golgi apparatus membrane. It localises to the golgi apparatus. It is found in the cis-Golgi network membrane. It catalyses the reaction Cleaves type-1 transmembrane domains using a catalytic dyad composed of serine and histidine that are contributed by different transmembrane domains.. Functionally, probable rhomboid-type serine protease that catalyzes intramembrane proteolysis. This is Rhomboid-type serine protease 2 (RBD2) from Yarrowia lipolytica (strain CLIB 122 / E 150) (Yeast).